We begin with the raw amino-acid sequence, 108 residues long: Envelope small membrane protein (108 aa).

Topologically, residues 1–10 (MNLLNKSLEE) are virion surface. The chain crosses the membrane as a helical span at residues 11–31 (NGSFLTALYIIVGFLALYLLG). Residues 32-108 (RALQAFVQAA…QDAQRDKLYS (77 aa)) are Intravirion-facing. The disordered stretch occupies residues 88–108 (NGWNNKNPANFQDAQRDKLYS). A compositionally biased stretch (polar residues) spans 89–100 (GWNNKNPANFQD).

The protein belongs to the gammacoronaviruses E protein family. As to quaternary structure, homooligomer. Interacts with the M membrane protein in the budding compartment of the host cell, which is located between endoplasmic reticulum and the Golgi complex. The cytoplasmic tails of both proteins are important for this function. Interacts with Nucleoprotein.

Its subcellular location is the host Golgi apparatus membrane. Its function is as follows. Plays a central role in virus morphogenesis and assembly. Acts as a viroporin and self-assembles in host membranes forming pentameric protein-lipid pores that allow ion transport. Also plays a role in the induction of apoptosis. This Gallus gallus (Chicken) protein is Envelope small membrane protein.